The following is a 475-amino-acid chain: Ribonuclease Y (475 aa).

The disordered stretch occupies residues 34 to 73 (EFERESRERRNELQRVERRLMQKEESLDKKSETLEQKDDR). A KH domain is found at 165-228 (TVTVVQLPND…EVARIALEKL (64 aa)). In terms of domain architecture, HD spans 291–384 (VLKHAIEVSH…VTAADAISAA (94 aa)).

Belongs to the RNase Y family.

Functionally, endoribonuclease that initiates mRNA decay. The chain is Ribonuclease Y from Alkaliphilus metalliredigens (strain QYMF).